We begin with the raw amino-acid sequence, 249 residues long: tRNA (guanine-N(1)-)-methyltransferase (249 aa).

S-adenosyl-L-methionine is bound by residues Gly113 and 132 to 137 (VGDFVV).

This sequence belongs to the RNA methyltransferase TrmD family. In terms of assembly, homodimer.

The protein resides in the cytoplasm. It catalyses the reaction guanosine(37) in tRNA + S-adenosyl-L-methionine = N(1)-methylguanosine(37) in tRNA + S-adenosyl-L-homocysteine + H(+). Its function is as follows. Specifically methylates guanosine-37 in various tRNAs. The protein is tRNA (guanine-N(1)-)-methyltransferase of Desulforudis audaxviator (strain MP104C).